A 346-amino-acid polypeptide reads, in one-letter code: NADH-quinone oxidoreductase subunit H (346 aa).

9 consecutive transmembrane segments (helical) span residues 13 to 33, 51 to 71, 83 to 103, 116 to 136, 162 to 182, 191 to 211, 244 to 264, 278 to 298, and 310 to 330; these read ILLI…ALAF, PNVV…KYIV, AVYF…WAVI, VAVL…IMGG, IGLI…TAIV, LLNW…ISAL, FMIG…LLFF, VFWM…VKAI, and LGWK…AFMA.

The protein belongs to the complex I subunit 1 family. NDH-1 is composed of 14 different subunits. Subunits NuoA, H, J, K, L, M, N constitute the membrane sector of the complex.

It localises to the cell inner membrane. It carries out the reaction a quinone + NADH + 5 H(+)(in) = a quinol + NAD(+) + 4 H(+)(out). Functionally, NDH-1 shuttles electrons from NADH, via FMN and iron-sulfur (Fe-S) centers, to quinones in the respiratory chain. The immediate electron acceptor for the enzyme in this species is believed to be ubiquinone. Couples the redox reaction to proton translocation (for every two electrons transferred, four hydrogen ions are translocated across the cytoplasmic membrane), and thus conserves the redox energy in a proton gradient. This subunit may bind ubiquinone. The polypeptide is NADH-quinone oxidoreductase subunit H (Jannaschia sp. (strain CCS1)).